A 188-amino-acid chain; its full sequence is ATP synthase subunit b (188 aa).

A helical transmembrane segment spans residues 24–44 (LPASYDIVWSLVVFIIVLILF).

It belongs to the ATPase B chain family. F-type ATPases have 2 components, F(1) - the catalytic core - and F(0) - the membrane proton channel. F(1) has five subunits: alpha(3), beta(3), gamma(1), delta(1), epsilon(1). F(0) has three main subunits: a(1), b(2) and c(10-14). The alpha and beta chains form an alternating ring which encloses part of the gamma chain. F(1) is attached to F(0) by a central stalk formed by the gamma and epsilon chains, while a peripheral stalk is formed by the delta and b chains.

The protein resides in the cell membrane. Functionally, f(1)F(0) ATP synthase produces ATP from ADP in the presence of a proton or sodium gradient. F-type ATPases consist of two structural domains, F(1) containing the extramembraneous catalytic core and F(0) containing the membrane proton channel, linked together by a central stalk and a peripheral stalk. During catalysis, ATP synthesis in the catalytic domain of F(1) is coupled via a rotary mechanism of the central stalk subunits to proton translocation. Its function is as follows. Component of the F(0) channel, it forms part of the peripheral stalk, linking F(1) to F(0). In Corynebacterium diphtheriae (strain ATCC 700971 / NCTC 13129 / Biotype gravis), this protein is ATP synthase subunit b.